The sequence spans 265 residues: MVELKEPFATLWRGKDPFEEVKTLQGEVFRELETRRTLRFEMAGKSYFLKWHRGTTLKEIIKNLLSLRMPVLGADREWNAIHRLRDVGVDTMYGVAFGEKGMNPLTRTSFIITEDLTPTISLEDYCADWATNPPDVRVKRMLIKRVATMVRDMHAAGINHRDCYICHFLLHLPFSGKEEELKISVIDLHRAQLRTRVPRRWRDKDLIGLYFSSMNIGLTQRDIWRFMKVYFAAPLKDILKQEQGLLSQAEAKATKIRERTIRKSL.

Residue Asp-162 is part of the active site.

Belongs to the protein kinase superfamily. KdkA/RfaP family. Mg(2+) is required as a cofactor.

It is found in the cell inner membrane. It catalyses the reaction an L-alpha-D-Hep-(1-&gt;3)-L-alpha-D-Hep-(1-&gt;5)-[alpha-Kdo-(2-&gt;4)]-alpha-Kdo-(2-&gt;6)-lipid A + ATP = an L-alpha-D-Hep-(1-&gt;3)-4-O-phospho-L-alpha-D-Hep-(1-&gt;5)-[alpha-Kdo-(2-&gt;4)]-alpha-Kdo-(2-&gt;6)-lipid A + ADP + H(+). The catalysed reaction is L-alpha-D-Hep-(1-&gt;3)-L-alpha-D-Hep-(1-&gt;5)-[alpha-Kdo-(2-&gt;4)]-alpha-Kdo-(2-&gt;6)-lipid A (E. coli) + ATP = L-alpha-D-Hep-(1-&gt;3)-4-O-phospho-L-alpha-D-Hep-(1-&gt;5)-[alpha-Kdo-(2-&gt;4)]-alpha-Kdo-(2-&gt;6)-lipid A (E. coli) + ADP + H(+). Its pathway is bacterial outer membrane biogenesis; LPS core biosynthesis. Functionally, kinase involved in the biosynthesis of the core oligosaccharide region of lipopolysaccharide (LPS). Catalyzes the phosphorylation of heptose I (HepI), the first heptose added to the Kdo2-lipid A module. This is Lipopolysaccharide core heptose(I) kinase WaaP from Escherichia coli.